The sequence spans 309 residues: Large ribosomal subunit protein mL45 (309 aa).

This sequence belongs to the mitochondrion-specific ribosomal protein mL45 family. In terms of assembly, component of the mitochondrial ribosome large subunit (39S) which comprises a 16S rRNA and about 50 distinct proteins.

Its subcellular location is the mitochondrion. In terms of biological role, component of the mitochondrial large ribosomal subunit (mt-LSU). Within the mitochondrial ribosomes, required to direct the nascent polypeptide toward the tunnel exit and position the exit at a distance from the membrane surface. This is Large ribosomal subunit protein mL45 (mrpl45) from Xenopus tropicalis (Western clawed frog).